A 193-amino-acid chain; its full sequence is dITP/XTP pyrophosphatase (193 aa).

Residue 7–12 (SENENK) coordinates substrate. The active-site Proton acceptor is the Asp-65. Position 65 (Asp-65) interacts with Mg(2+). Substrate contacts are provided by residues Ser-66, 144–147 (FGYD), Lys-167, and 172–173 (HR).

The protein belongs to the HAM1 NTPase family. In terms of assembly, homodimer. The cofactor is Mg(2+).

The catalysed reaction is XTP + H2O = XMP + diphosphate + H(+). It catalyses the reaction dITP + H2O = dIMP + diphosphate + H(+). The enzyme catalyses ITP + H2O = IMP + diphosphate + H(+). Pyrophosphatase that catalyzes the hydrolysis of nucleoside triphosphates to their monophosphate derivatives, with a high preference for the non-canonical purine nucleotides XTP (xanthosine triphosphate), dITP (deoxyinosine triphosphate) and ITP. Seems to function as a house-cleaning enzyme that removes non-canonical purine nucleotides from the nucleotide pool, thus preventing their incorporation into DNA/RNA and avoiding chromosomal lesions. This is dITP/XTP pyrophosphatase from Tropheryma whipplei (strain Twist) (Whipple's bacillus).